Reading from the N-terminus, the 61-residue chain is Metallothionein-2B (61 aa).

An N-acetylmethionine modification is found at methionine 1. A beta region spans residues 1-29; the sequence is MDPNCSCATGDSCTCASSCKCKECKCTSC. A divalent metal cation contacts are provided by cysteine 5, cysteine 7, cysteine 13, cysteine 15, cysteine 19, cysteine 21, cysteine 24, cysteine 26, cysteine 29, cysteine 33, cysteine 34, cysteine 36, cysteine 37, cysteine 41, cysteine 44, cysteine 48, cysteine 50, cysteine 57, cysteine 59, and cysteine 60. Residues 30–61 form an alpha region; it reads KKSCCSCCPAGCTKCAQGCICKGASDKCSCCA.

It belongs to the metallothionein superfamily. Type 1 family. Monomer.

Metallothioneins have a high content of cysteine residues that bind various heavy metals; these proteins are transcriptionally regulated by both heavy metals and glucocorticoids. This is Metallothionein-2B from Oryctolagus cuniculus (Rabbit).